A 499-amino-acid polypeptide reads, in one-letter code: Glycerol kinase (499 aa).

T13 is a binding site for ADP. 3 residues coordinate ATP: T13, T14, and S15. T13 is a binding site for sn-glycerol 3-phosphate. Residue R17 participates in ADP binding. Residues R83, E84, Y135, and D244 each coordinate sn-glycerol 3-phosphate. Residues R83, E84, Y135, D244, and Q245 each coordinate glycerol. ADP contacts are provided by T266 and G309. Residues T266, G309, Q313, and G410 each contribute to the ATP site. Positions 410 and 414 each coordinate ADP.

It belongs to the FGGY kinase family.

It catalyses the reaction glycerol + ATP = sn-glycerol 3-phosphate + ADP + H(+). It functions in the pathway polyol metabolism; glycerol degradation via glycerol kinase pathway; sn-glycerol 3-phosphate from glycerol: step 1/1. Inhibited by fructose 1,6-bisphosphate (FBP). In terms of biological role, key enzyme in the regulation of glycerol uptake and metabolism. Catalyzes the phosphorylation of glycerol to yield sn-glycerol 3-phosphate. The polypeptide is Glycerol kinase (Paraburkholderia phymatum (strain DSM 17167 / CIP 108236 / LMG 21445 / STM815) (Burkholderia phymatum)).